Here is a 381-residue protein sequence, read N- to C-terminus: Cytochrome b (381 aa).

A run of 4 helical transmembrane segments spans residues 38–58 (FGSLLGLCLLIQIVIGLFLAM), 82–103 (WLLRTVHANGASFFFICIYFHI), 118–138 (WMTGIALLFLVMAAAFLGYVL), and 183–203 (FFTFHFLIPFLVAGLTMIHLL). Heme b contacts are provided by His88 and His102. Heme b-binding residues include His187 and His201. His206 contacts a ubiquinone. Transmembrane regions (helical) follow at residues 231-251 (IKDTVGFMVLIFFLVTLSLTS), 293-313 (LGGVIALVSSILILVSLPFTF), 325-345 (VAQPLFWSWVSVFLLLTWIGA), and 352-372 (YNFLGQILTCAYFSYFVFTPI).

Belongs to the cytochrome b family. As to quaternary structure, the main subunits of complex b-c1 are: cytochrome b, cytochrome c1 and the Rieske protein. The cofactor is heme b.

It is found in the mitochondrion inner membrane. Functionally, component of the ubiquinol-cytochrome c reductase complex (complex III or cytochrome b-c1 complex) that is part of the mitochondrial respiratory chain. The b-c1 complex mediates electron transfer from ubiquinol to cytochrome c. Contributes to the generation of a proton gradient across the mitochondrial membrane that is then used for ATP synthesis. The protein is Cytochrome b (MT-CYB) of Artemia franciscana (Brine shrimp).